The primary structure comprises 580 residues: Trafficking protein particle complex subunit 14 (580 aa).

Disordered stretches follow at residues 90–138 and 480–533; these read GMPG…ATTL and VSHP…RSGS. Gly residues predominate over residues 105–116; the sequence is PGGGDPGGGGLF. Low complexity predominate over residues 124–137; sequence THGPGPATSGGATT. The residue at position 491 (serine 491) is a Phosphoserine. Over residues 492–502 the composition is skewed to low complexity; the sequence is RKSSPSSPAVR. Residues 512-525 show a composition bias toward polar residues; that stretch reads LGRSQSFSHQQPSR. At serine 517 the chain carries Phosphoserine. Threonine 541 carries the post-translational modification Phosphothreonine. Serine 546 carries the phosphoserine modification.

In terms of assembly, component of the multisubunit TRAPP II complex, which includes at least TRAPPC1, TRAPPC2, TRAPPC2L, TRAPPC3, TRAPPC4, TRAPPC5, TRAPPC6A/B, TRAPPC9, TRAPPC10 and TRAPPC14. TRAPPC9, TRAPPC10 and TRAPPC14 are specific subunits of the TRAPP II complex. Interacts with alpha-tubulin during mitosis. Interacts with RAB3IP (via the N-terminal region); this interaction mediates RAB3IP association with the TRAPP II complex. Interacts with TRAPPC10. Interacts with FBF1. As to expression, broadly expressed. High levels in brain, cerebellum, testis and whole blood.

It localises to the cytoplasm. The protein resides in the cytoskeleton. Its subcellular location is the spindle. It is found in the vesicle. The protein localises to the midbody. Specific subunit of the TRAPP (transport protein particle) II complex, a highly conserved vesicle tethering complex that functions in late Golgi trafficking as a membrane tether. TRAPP II complex also has GEF activity toward RAB1A. TRAPPC14 is dispensable for TRAPPII complex integrity but mediates RAB3IP preciliary vesicle trafficking to the mother centriole during ciliogenesis. Modulates YAP1 activity as transcriptional regulator. The sequence is that of Trafficking protein particle complex subunit 14 from Homo sapiens (Human).